Consider the following 1804-residue polypeptide: Collagen alpha-1(XI) chain (1804 aa).

The first 34 residues, 1–34, serve as a signal peptide directing secretion; that stretch reads MEPWSRWKTKRWIWDLTISTLALTFLFQAREVRG. Residues 35-511 constitute a propeptide, N-terminal propeptide; it reads AAPVDILKAL…SKGPTISAQE (477 aa). 2 disulfides stabilise this stretch: Cys-60–Cys-242 and Cys-181–Cys-235. A Laminin G-like domain is found at 70–242; the sequence is DVAYRVTEEA…DYCDHYSPDC (173 aa). The interval 229 to 417 is nonhelical region; the sequence is KAAYDYCDHY…DFTETSINGH (189 aa). Over residues 315 to 329 the composition is skewed to polar residues; it reads YQTETPRRVSGSNEP. Disordered regions lie at residues 315–334 and 433–506; these read YQTE…PVEE and EPGM…KGPT. The triple-helical region (interrupted) stretch occupies residues 418 to 506; that stretch reads GAYGEKGQKG…YGGDGSKGPT (89 aa). Residues 440–488 form the Collagen-like 1 domain; the sequence is GPPGPAGPAGLMGPPGLQGPSGLPGDPGDRGPPGRPGLPGADGLPGPPG. Low complexity-rich tracts occupy residues 447–465 and 477–494; these read PAGL…LPGD and LPGA…LMLP. The interval 507–509 is short nonhelical segment; that stretch reads ISA. Positions 510–527 are telopeptide; that stretch reads QEAQAQAILQQARIALRG. A disordered region spans residues 526 to 1567; sequence RGPPGPMGLT…SIQGDAGDNI (1042 aa). 2 Collagen-like domains span residues 527 to 584 and 567 to 623; these read GPPG…GADG and PPGP…GPPG. A triple-helical region region spans residues 528–1540; sequence PPGPMGLTGR…PGPPGPPGEV (1013 aa). 2 stretches are compositionally biased toward gly residues: residues 539-548 and 581-590; these read GPVGGPGSAG and GADGGRGMPG. The residue at position 610 (Lys-610) is an Allysine. The span at 639-655 shows a compositional bias: low complexity; sequence PRGLPGEAGPRGLLGPR. Positions 697–708 are enriched in pro residues; sequence QGLPGPQGPIGP. Positions 715–726 are enriched in low complexity; the sequence is QGKPGLAGLPGA. Residues 728 to 781 form the Collagen-like 4 domain; sequence GPPGHPGKEGQSGEKGALGPPGPQGPIGYPGPRGVKGADGVRGLKGSKGEKGED. The span at 805 to 814 shows a compositional bias: basic and acidic residues; it reads RGEDGPEGPK. Composition is skewed to low complexity over residues 873–901, 916–925, and 969–979; these read KPGP…PGPK, RGPQGPQGPV, and PQGPTGETGPI. The segment covering 1040-1049 has biased composition (gly residues); it reads GLKGGEGPQG. A compositionally biased stretch (pro residues) spans 1074–1083; it reads RPGPQGPPGP. Low complexity predominate over residues 1084–1108; the sequence is AGEKGAPGEKGPQGPAGRDGVQGPV. Gly residues predominate over residues 1160–1169; sequence GIAGGDGEPG. A compositionally biased stretch (pro residues) spans 1216-1227; sequence MGPPGPPGPRGP. 2 stretches are compositionally biased toward low complexity: residues 1240-1249 and 1282-1296; these read PGSIGSVGVV and AGPP…IKGP. Positions 1341–1360 are enriched in pro residues; the sequence is QPGPPGPSGEAGPPGPPGKR. Low complexity-rich tracts occupy residues 1383 to 1392 and 1417 to 1426; these read AEGPPGKTGP and QGLPGAAGQD. 2 consecutive Collagen-like domains span residues 1427 to 1482 and 1481 to 1539; these read GPPG…SPGA and GAKG…PPGE. The segment covering 1428–1437 has biased composition (pro residues); it reads PPGPLGPPGL. Allysine is present on Lys-1450. A compositionally biased stretch (low complexity) spans 1453–1462; that stretch reads PGLIGLIGPP. Residues 1481–1490 are compositionally biased toward gly residues; sequence GAKGDGGIPG. The segment covering 1491–1507 has biased composition (pro residues); it reads PAGPIGPPGPPGLPGPA. The span at 1509-1519 shows a compositional bias: low complexity; that stretch reads PKGNKGSSGPT. Over residues 1528-1537 the composition is skewed to pro residues; it reads PGPPGPPGPP. Residues 1541 to 1561 form a nonhelical region (C-terminal) region; that stretch reads IQPLPILSPKKTRRHTESIQG. A propeptide spans 1562-1804 (C-terminal propeptide); sequence DAGDNILDYS…FEVGPACFLG (243 aa). Positions 1575-1803 constitute a Fibrillar collagen NC1 domain; the sequence is EEIFGSLNSL…GFEVGPACFL (229 aa). The cysteines at positions 1605 and 1637 are disulfide-linked. Ca(2+) is bound by residues Asp-1623, Asn-1625, Gln-1626, Cys-1628, and Asp-1631. N-linked (GlcNAc...) asparagine glycosylation occurs at Asn-1638. Disulfide bonds link Cys-1646-Cys-1801 and Cys-1712-Cys-1755.

The protein belongs to the fibrillar collagen family. As to quaternary structure, trimers composed of three different chains: alpha 1(XI), alpha 2(XI), and alpha 3(XI). Alpha 3(XI) is a post-translational modification of alpha 1(II). Alpha 1(V) can also be found instead of alpha 3(XI)=1(II). Post-translationally, prolines at the third position of the tripeptide repeating unit (G-X-Y) are hydroxylated in some or all of the chains. In terms of processing, N-glycosylated.

It is found in the secreted. It localises to the extracellular space. Its subcellular location is the extracellular matrix. In terms of biological role, may play an important role in fibrillogenesis by controlling lateral growth of collagen II fibrils. In Mus musculus (Mouse), this protein is Collagen alpha-1(XI) chain (Col11a1).